Consider the following 210-residue polypeptide: HTH-type transcriptional repressor FabR (210 aa).

The HTH tetR-type domain maps to 10-70 (KTRRSLVEAA…TMVDESGLML (61 aa)). Positions 33–52 (SLREVAREAGIAPTSFYRHF) form a DNA-binding region, H-T-H motif.

As to quaternary structure, homodimer.

The protein resides in the cytoplasm. Represses the transcription of fabB, involved in unsaturated fatty acid (UFA) biosynthesis. By controlling UFA production, FabR directly influences the physical properties of the membrane bilayer. This chain is HTH-type transcriptional repressor FabR, found in Salmonella choleraesuis (strain SC-B67).